A 505-amino-acid polypeptide reads, in one-letter code: Betaine aldehyde dehydrogenase 1 (505 aa).

163 to 172 (WNYPLLMATW) is a betaine aldehyde binding site. NAD(+) is bound at residue 240–245 (GSTETG). Betaine aldehyde contacts are provided by residues glutamate 262, 294–297 (QVCS), and cysteine 455. Residues glutamate 262 and cysteine 296 contribute to the active site. 4-aminobutanal-binding positions include 262–263 (EL) and cysteine 296. Tryptophan 461 contacts 4-aminobutanal. The Microbody targeting signal motif lies at 503–505 (SKL).

This sequence belongs to the aldehyde dehydrogenase family. As to quaternary structure, homodimer.

It is found in the peroxisome. The catalysed reaction is betaine aldehyde + NAD(+) + H2O = glycine betaine + NADH + 2 H(+). Its pathway is amine and polyamine biosynthesis; betaine biosynthesis via choline pathway; betaine from betaine aldehyde: step 1/1. Functionally, dehydrogenase that can use N-acetyl-gamma-aminobutyraldehyde (NAGABald), gamma-guanidinobutyraldehyde (GGBald), betaine aldehyde (Bet-ald), gamma-aminobutyraldehyde (GAB-ald), acetaldehyde, 4-aminobutylaldehyde (AB-ald), 3-aminopropionaldehyde (AP-ald), 4-N-trimethylaminobutyraldehyde (TMAB-ald) and 3-N-trimethylaminopropionaldehyde (TMAP-ald) as substrates. Catalyzes the oxidation of GAB-ald more efficiently than Bet-ald. May convert acetaldehyde into acetate, thus facilitating the production of acetyl-CoA in peroxisomes under anaerobic conditions. This Oryza sativa subsp. japonica (Rice) protein is Betaine aldehyde dehydrogenase 1 (BADH1).